A 263-amino-acid chain; its full sequence is Isatin hydrolase (263 aa).

Residue 62-66 (FFAWN) coordinates substrate. Mn(2+)-binding residues include histidine 73, histidine 77, and aspartate 79. Histidine 83 (proton donor/acceptor) is an active-site residue. Substrate is bound at residue histidine 212.

It belongs to the Cyclase 1 superfamily. Homodimer. Mn(2+) serves as cofactor.

It catalyses the reaction isatin + H2O = isatinate + H(+). With respect to regulation, inhibited by thioisatinate. Its function is as follows. Involved in the degradation of the plant hormone indole-3-acetic acid (IAA). Catalyzes the hydrolysis of the cyclic amide bond (lactam) of isatin (1H-indole-2,3-dione) to yield isatinate (2-(2-aminophenyl)-2-oxoacetate). This is Isatin hydrolase from Roseibium aggregatum (strain ATCC 25650 / DSM 13394 / JCM 20685 / NBRC 16684 / NCIMB 2208 / IAM 12614 / B1) (Stappia aggregata).